Consider the following 156-residue polypeptide: Transcription antitermination protein NusB (156 aa).

This sequence belongs to the NusB family.

Its function is as follows. Involved in transcription antitermination. Required for transcription of ribosomal RNA (rRNA) genes. Binds specifically to the boxA antiterminator sequence of the ribosomal RNA (rrn) operons. In Bartonella tribocorum (strain CIP 105476 / IBS 506), this protein is Transcription antitermination protein NusB.